The chain runs to 227 residues: Cytochrome c oxidase subunit 2 (227 aa).

Residues 1-14 (MAYPFQLGLQDATS) are Mitochondrial intermembrane-facing. The helical transmembrane segment at 15–45 (PIMEELLHFHDHTLMIVFLISSLILYIISLM) threads the bilayer. Topologically, residues 46–59 (LTTKLTHTSTMDAQ) are mitochondrial matrix. Residues 60–87 (EVETVWTILPAIILILIALPSLRILYMM) form a helical membrane-spanning segment. At 88-227 (DEINNPSLTV…YFETWSALMV (140 aa)) the chain is on the mitochondrial intermembrane side. Residues His-161, Cys-196, Glu-198, Cys-200, His-204, and Met-207 each contribute to the Cu cation site. A Mg(2+)-binding site is contributed by Glu-198. Tyr-218 is subject to Phosphotyrosine.

This sequence belongs to the cytochrome c oxidase subunit 2 family. As to quaternary structure, component of the cytochrome c oxidase (complex IV, CIV), a multisubunit enzyme composed of 14 subunits. The complex is composed of a catalytic core of 3 subunits MT-CO1, MT-CO2 and MT-CO3, encoded in the mitochondrial DNA, and 11 supernumerary subunits COX4I, COX5A, COX5B, COX6A, COX6B, COX6C, COX7A, COX7B, COX7C, COX8 and NDUFA4, which are encoded in the nuclear genome. The complex exists as a monomer or a dimer and forms supercomplexes (SCs) in the inner mitochondrial membrane with NADH-ubiquinone oxidoreductase (complex I, CI) and ubiquinol-cytochrome c oxidoreductase (cytochrome b-c1 complex, complex III, CIII), resulting in different assemblies (supercomplex SCI(1)III(2)IV(1) and megacomplex MCI(2)III(2)IV(2)). Found in a complex with TMEM177, COA6, COX18, COX20, SCO1 and SCO2. Interacts with TMEM177 in a COX20-dependent manner. Interacts with COX20. Interacts with COX16. Requires Cu cation as cofactor.

The protein resides in the mitochondrion inner membrane. It carries out the reaction 4 Fe(II)-[cytochrome c] + O2 + 8 H(+)(in) = 4 Fe(III)-[cytochrome c] + 2 H2O + 4 H(+)(out). Functionally, component of the cytochrome c oxidase, the last enzyme in the mitochondrial electron transport chain which drives oxidative phosphorylation. The respiratory chain contains 3 multisubunit complexes succinate dehydrogenase (complex II, CII), ubiquinol-cytochrome c oxidoreductase (cytochrome b-c1 complex, complex III, CIII) and cytochrome c oxidase (complex IV, CIV), that cooperate to transfer electrons derived from NADH and succinate to molecular oxygen, creating an electrochemical gradient over the inner membrane that drives transmembrane transport and the ATP synthase. Cytochrome c oxidase is the component of the respiratory chain that catalyzes the reduction of oxygen to water. Electrons originating from reduced cytochrome c in the intermembrane space (IMS) are transferred via the dinuclear copper A center (CU(A)) of subunit 2 and heme A of subunit 1 to the active site in subunit 1, a binuclear center (BNC) formed by heme A3 and copper B (CU(B)). The BNC reduces molecular oxygen to 2 water molecules using 4 electrons from cytochrome c in the IMS and 4 protons from the mitochondrial matrix. This chain is Cytochrome c oxidase subunit 2 (MT-CO2), found in Canis simensis (Ethiopian wolf).